The following is a 430-amino-acid chain: Protein trichome birefringence-like 24 (430 aa).

Residues 15–35 (VLLIKLISAILISFFAFRLFI) traverse the membrane as a helical; Signal-anchor for type II membrane protein segment. The short motif at 153 to 155 (GDS) is the GDS motif element. A DCXHWCLPGXXDXWN motif motif is present at residues 406-420 (DCLHWCLPGPFDYLN).

This sequence belongs to the PC-esterase family. TBL subfamily.

The protein localises to the membrane. In terms of biological role, may act as a bridging protein that binds pectin and other cell wall polysaccharides. Probably involved in maintaining esterification of pectins. May be involved in the specific O-acetylation of cell wall polymers. This chain is Protein trichome birefringence-like 24 (TBL24), found in Arabidopsis thaliana (Mouse-ear cress).